A 143-amino-acid chain; its full sequence is uncharacterized protein (143 aa).

Residues 4 to 24 (FGIVALSIICSIAFLFVAYGV) traverse the membrane as a helical segment. The tract at residues 97–143 (TVPFVNTEAPPPRLSSSFSRQSGENAETQSQVSASPFNDKNSPYVQE) is disordered. Positions 110-143 (LSSSFSRQSGENAETQSQVSASPFNDKNSPYVQE) are enriched in polar residues.

It localises to the golgi apparatus membrane. This is an uncharacterized protein from Schizosaccharomyces pombe (strain 972 / ATCC 24843) (Fission yeast).